A 302-amino-acid polypeptide reads, in one-letter code: MPHTNEDPTAQQAGVILDPPPPLPPPPQIHLLPPTVAKCKFFKKVAENSDPSTGGCEELKKMIKNRQSRFNGELKWLLYNQYVPSLIQEGPQCGLVALWMAGKLLNLAHEAPLQTIVEAAVSRGYTAQGEMFSAANMAVLAKEVFGCRSELLTGGMDGENKGKILQQLTSGLPVLIPYDEDFNHEPCQREGHRAHWAVISGVLFGVRCGSFSPDPDIPGLCYPSSDSPSLEDLNIQEIYLVAKQGKSLRYQLWEYDCISRSNGQLIHLDPKRSNDGNVYIVPSGGVKAGLCGQIVLFQPKDV.

The disordered stretch occupies residues 1–26; the sequence is MPHTNEDPTAQQAGVILDPPPPLPPP. The interval 85–205 is peptidase C39-like; sequence SLIQEGPQCG…WAVISGVLFG (121 aa). Residue Cys93 is part of the active site.

The protein belongs to the ACTMAP family.

Its subcellular location is the cytoplasm. It catalyses the reaction N-terminal N(alpha)-acetyl-L-methionyl-L-aspartyl-[protein] + H2O = N-terminal L-aspartyl-[protein] + N-acetyl-L-methionine. The catalysed reaction is N-terminal N(alpha)-acetyl-L-methionyl-L-glutamyl-[protein] + H2O = N-terminal L-glutamyl-[protein] + N-acetyl-L-methionine. It carries out the reaction N-terminal N(alpha)-acetyl-L-cysteinyl-L-aspartyl-[protein] + H2O = N-terminal L-aspartyl-[protein] + N-acetyl-L-cysteine. The enzyme catalyses N-terminal N(alpha)-acetyl-L-cysteinyl-L-glutamyl-[protein] + H2O = N-terminal L-glutamyl-[protein] + N-acetyl-L-cysteine. Actin maturation protease that specifically mediates the cleavage of immature acetylated N-terminal actin, thereby contributing to actin maturation. Cleaves N-terminal acetylated methionine of immature cytoplasmic beta- and gamma-actin after translation. Cleaves N-terminal acetylated cysteine of muscle alpha-actin after canonical removal of N-terminal methionine. The sequence is that of Actin maturation protease from Xenopus tropicalis (Western clawed frog).